Reading from the N-terminus, the 391-residue chain is MIRPFLLLAAVGLLTACAQQPLRGTGDLGVVVERATGSLQIIESSNQSQIARIEGLGDLSHASVVFSRDQRYAYVFGRDGGLTKVDLLRHRIDRRVIQGGNSIGGAISQDGTLIAVGNYEPGGVKVFDAKTLELVADIPATPLADGSRNARVVGVIDVPGRRFIYSLFDTDETWLLDFSQGNEPQITRFEGIGRQPYDALLTPEGRYYIAGLFGEDGMAKIDLWHPERGVERILDGYGRGEQKLPVYKMPHLEGWTVAGNQTFVPAVGQHRVLVMDSQNWQQTAAIDVAGQPIFVMARPDARQIWVNFAHPDNHRVQVIDSETHEIIADLEPGPAVLHMEFTARGDQLWLSVRDGEEIQVWDPYTLKLLKRLPAHSPSGIFFSSRAHETGL.

The protein localises to the cytoplasm. In terms of biological role, required for the biosynthesis of heme d1 of nitrite reductase. Could have a dehydrogenase activity yielding sirohydrochlorin from precorrin-2 or dehydrogenation of propionate side chain C17. The protein is Protein NirF (nirF) of Stutzerimonas stutzeri (Pseudomonas stutzeri).